The chain runs to 323 residues: Acetyl-coenzyme A carboxylase carboxyl transferase subunit alpha (323 aa).

The 255-residue stretch at 39 to 293 folds into the CoA carboxyltransferase C-terminal domain; sequence RLSKKSQQLT…RRALGDSLRQ (255 aa).

The protein belongs to the AccA family. In terms of assembly, acetyl-CoA carboxylase is a heterohexamer composed of biotin carboxyl carrier protein (AccB), biotin carboxylase (AccC) and two subunits each of ACCase subunit alpha (AccA) and ACCase subunit beta (AccD).

The protein localises to the cytoplasm. It catalyses the reaction N(6)-carboxybiotinyl-L-lysyl-[protein] + acetyl-CoA = N(6)-biotinyl-L-lysyl-[protein] + malonyl-CoA. The protein operates within lipid metabolism; malonyl-CoA biosynthesis; malonyl-CoA from acetyl-CoA: step 1/1. Its function is as follows. Component of the acetyl coenzyme A carboxylase (ACC) complex. First, biotin carboxylase catalyzes the carboxylation of biotin on its carrier protein (BCCP) and then the CO(2) group is transferred by the carboxyltransferase to acetyl-CoA to form malonyl-CoA. This is Acetyl-coenzyme A carboxylase carboxyl transferase subunit alpha from Burkholderia pseudomallei (strain 1106a).